We begin with the raw amino-acid sequence, 827 residues long: Leucine--tRNA ligase (827 aa).

Positions 46–56 match the 'HIGH' region motif; that stretch reads PYPSGRIHMGH. The 'KMSKS' region motif lies at 585–589; the sequence is KMSKS. Position 588 (Lys-588) interacts with ATP.

The protein belongs to the class-I aminoacyl-tRNA synthetase family.

Its subcellular location is the cytoplasm. The enzyme catalyses tRNA(Leu) + L-leucine + ATP = L-leucyl-tRNA(Leu) + AMP + diphosphate. The chain is Leucine--tRNA ligase from Desulfotalea psychrophila (strain LSv54 / DSM 12343).